Here is a 294-residue protein sequence, read N- to C-terminus: Transmembrane protein 178B (294 aa).

The first 23 residues, 1–23, serve as a signal peptide directing secretion; the sequence is MAAGRLLLYTGLSLALCALGMLA. Residues N148 and N152 are each glycosylated (N-linked (GlcNAc...) asparagine). The next 3 membrane-spanning stretches (helical) occupy residues 172 to 192, 206 to 226, and 252 to 272; these read AGFM…GVLG, LLFL…VAGI, and MFCA…CTLA.

This sequence belongs to the TMEM178 family.

Its subcellular location is the membrane. This is Transmembrane protein 178B (TMEM178B) from Homo sapiens (Human).